The chain runs to 433 residues: MGIIDEAKRGQITDEMRAISKLEGIPVEKVRNRISEGKIMLIRNAKYPSRKLVPIGKRLTTKVNVNIGTSSEVVDLDMELQKVKVANKWGDTLMDLSTGGDLDAIRRDIIKASDLPVGTVPVYQIFIESFKKKSGGAYFTEDELLNTVEKHLKDGVAFMTIHAGITKDLAIRALKSDRIIPIVSRGGDMIAGWMIHNNSENPYRKNWDYVLEMFKEYDAVISLGDALRPGATGDAHDEFQIGELLETARLVKSALQKGVQVMVEGPGHVPLNEIAWDVKLMKKLTGGVPYYVLGPLPIDVGAPYDHIASAIGAAISSASGVDLLCYLTPAEHLGLPTVKQVEEGAIAYRIAAHAGDVVKLGRKARKWDDEVSYYRGKLDWENMISKLIDPQRAYQVYTQFGTPKVKACTMCGGYCPMMWAMDQVRKIGSSSSL.

Residues asparagine 66, methionine 94, tyrosine 123, histidine 162, 184-186, 225-228, and glutamate 264 contribute to the substrate site; these read SRG and DALR. Histidine 268 contacts Zn(2+). A substrate-binding site is contributed by tyrosine 291. Residue histidine 332 coordinates Zn(2+). [4Fe-4S] cluster contacts are provided by cysteine 408, cysteine 411, and cysteine 415.

Belongs to the ThiC family. [4Fe-4S] cluster is required as a cofactor.

It carries out the reaction 5-amino-1-(5-phospho-beta-D-ribosyl)imidazole + S-adenosyl-L-methionine = 4-amino-2-methyl-5-(phosphooxymethyl)pyrimidine + CO + 5'-deoxyadenosine + formate + L-methionine + 3 H(+). It functions in the pathway cofactor biosynthesis; thiamine diphosphate biosynthesis. Its function is as follows. Catalyzes the synthesis of the hydroxymethylpyrimidine phosphate (HMP-P) moiety of thiamine from aminoimidazole ribotide (AIR) in a radical S-adenosyl-L-methionine (SAM)-dependent reaction. The polypeptide is Phosphomethylpyrimidine synthase (Saccharolobus islandicus (strain M.14.25 / Kamchatka #1) (Sulfolobus islandicus)).